Here is a 147-residue protein sequence, read N- to C-terminus: Myoglobin (147 aa).

Residues 2–141 form the Globin domain; sequence ADFDMVLKCW…IIADMEADYK (140 aa). Residue histidine 60 coordinates nitrite. Histidine 60 is a binding site for O2. Residue histidine 89 coordinates heme b.

The protein belongs to the globin family. As to quaternary structure, monomeric.

The protein resides in the cytoplasm. It localises to the sarcoplasm. The enzyme catalyses Fe(III)-heme b-[protein] + nitric oxide + H2O = Fe(II)-heme b-[protein] + nitrite + 2 H(+). It carries out the reaction H2O2 + AH2 = A + 2 H2O. Monomeric heme protein which primary function is to store oxygen and facilitate its diffusion within muscle tissues. Reversibly binds oxygen through a pentacoordinated heme iron and enables its timely and efficient release as needed during periods of heightened demand. Depending on the oxidative conditions of tissues and cells, and in addition to its ability to bind oxygen, it also has a nitrite reductase activity whereby it regulates the production of bioactive nitric oxide. Under stress conditions, like hypoxia and anoxia, it also protects cells against reactive oxygen species thanks to its pseudoperoxidase activity. The polypeptide is Myoglobin (mb) (Notothenia neglecta (Yellowbelly rockcod)).